We begin with the raw amino-acid sequence, 272 residues long: Dermonecrotic toxin LvSicTox-alphaIC1biii (272 aa).

Residue histidine 5 is part of the active site. The Mg(2+) site is built by glutamate 25 and aspartate 27. The active-site Nucleophile is the histidine 41. 2 cysteine pairs are disulfide-bonded: cysteine 45–cysteine 51 and cysteine 47–cysteine 189. Aspartate 84 contributes to the Mg(2+) binding site.

The protein belongs to the arthropod phospholipase D family. Class II subfamily. It depends on Mg(2+) as a cofactor. In terms of tissue distribution, expressed by the venom gland.

The protein resides in the secreted. It carries out the reaction an N-(acyl)-sphingosylphosphocholine = an N-(acyl)-sphingosyl-1,3-cyclic phosphate + choline. The catalysed reaction is an N-(acyl)-sphingosylphosphoethanolamine = an N-(acyl)-sphingosyl-1,3-cyclic phosphate + ethanolamine. It catalyses the reaction a 1-acyl-sn-glycero-3-phosphocholine = a 1-acyl-sn-glycero-2,3-cyclic phosphate + choline. The enzyme catalyses a 1-acyl-sn-glycero-3-phosphoethanolamine = a 1-acyl-sn-glycero-2,3-cyclic phosphate + ethanolamine. Its function is as follows. Dermonecrotic toxins cleave the phosphodiester linkage between the phosphate and headgroup of certain phospholipids (sphingolipid and lysolipid substrates), forming an alcohol (often choline) and a cyclic phosphate. This toxin acts on sphingomyelin (SM). It may also act on ceramide phosphoethanolamine (CPE), lysophosphatidylcholine (LPC) and lysophosphatidylethanolamine (LPE), but not on lysophosphatidylserine (LPS), and lysophosphatidylglycerol (LPG). It acts by transphosphatidylation, releasing exclusively cyclic phosphate products as second products. Induces dermonecrosis, hemolysis, increased vascular permeability, edema, inflammatory response, and platelet aggregation. This is Dermonecrotic toxin LvSicTox-alphaIC1biii from Loxosceles variegata (Recluse spider).